The sequence spans 739 residues: Trehalose phosphorylase (739 aa).

A propeptide spanning residues 1-26 (MSTPHHQFESKSSTAIRRRLSSSVSS) is cleaved from the precursor. A disordered region spans residues 1 to 28 (MSTPHHQFESKSSTAIRRRLSSSVSSKQ).

The protein belongs to the glycosyltransferase group 1 family. Glycosyltransferase 4 subfamily. Homodimer.

It catalyses the reaction alpha,alpha-trehalose + phosphate = alpha-D-glucose + alpha-D-glucose 1-phosphate. In terms of biological role, reversibly catalyzes the synthesis and degradation of trehalose from glucose and alpha-D-glucose 1-phosphate. The equilibrium lies in the direction of trehalose synthesis. The sequence is that of Trehalose phosphorylase from Pleurotus pulmonarius (Indian oyster mushroom).